The following is a 142-amino-acid chain: Large ribosomal subunit protein uL11 (142 aa).

This sequence belongs to the universal ribosomal protein uL11 family. As to quaternary structure, part of the ribosomal stalk of the 50S ribosomal subunit. Interacts with L10 and the large rRNA to form the base of the stalk. L10 forms an elongated spine to which L12 dimers bind in a sequential fashion forming a multimeric L10(L12)X complex. Post-translationally, one or more lysine residues are methylated.

Its function is as follows. Forms part of the ribosomal stalk which helps the ribosome interact with GTP-bound translation factors. The sequence is that of Large ribosomal subunit protein uL11 from Rhodopseudomonas palustris (strain BisB18).